The primary structure comprises 804 residues: DEP domain-containing protein 1A (804 aa).

Residues 24-108 form the DEP domain; that stretch reads FRVGMPLRKH…DNNQLFRFPA (85 aa). The Rho-GAP domain maps to 282–322; sequence DYFLNLPEPLLTFEYYELFVNILVVCGYITVSDRTSGIHKI. S513 carries the post-translational modification Phosphoserine. The interaction with ZNF224 stretch occupies residues 592–647; that stretch reads AINALQLCCLLLPPPNRRKLQLLMRMISRMSQNVDMPKLHEQIGTRSLMINTFSRC. Residues 726 to 760 are a coiled coil; sequence EQKISTSQAAIAELLENIVRSKSLSLKEKRRKLKQ.

Can form dimers. Interacts with ZNF224.

Its subcellular location is the nucleus. May be involved in transcriptional regulation as a transcriptional corepressor. The DEPDC1A-ZNF224 complex may play a critical role in bladder carcinogenesis by repressing the transcription of the A20 gene, leading to transport of NF-KB protein into the nucleus, resulting in suppression of apoptosis of bladder cancer cells. The chain is DEP domain-containing protein 1A (Depdc1a) from Mus musculus (Mouse).